The chain runs to 121 residues: UPF0344 protein BCE_1257 (121 aa).

4 helical membrane-spanning segments follow: residues 6-26 (ITAW…YSAG), 38-58 (LMYI…VKTA), 65-85 (WYGL…MVLV), and 92-112 (PTGA…YLGL).

This sequence belongs to the UPF0344 family.

Its subcellular location is the cell membrane. The sequence is that of UPF0344 protein BCE_1257 from Bacillus cereus (strain ATCC 10987 / NRS 248).